We begin with the raw amino-acid sequence, 88 residues long: UPF0297 protein BPUM_2379 (88 aa).

Belongs to the UPF0297 family.

The protein is UPF0297 protein BPUM_2379 of Bacillus pumilus (strain SAFR-032).